Consider the following 227-residue polypeptide: PKHD-type hydroxylase Bxeno_B2194 (227 aa).

Residues 78 to 178 (KVFPPLFNRY…RVASFFWIQS (101 aa)) form the Fe2OG dioxygenase domain. Residues H96, D98, and H159 each contribute to the Fe cation site. 2-oxoglutarate is bound at residue R169.

Fe(2+) serves as cofactor. It depends on L-ascorbate as a cofactor.

The sequence is that of PKHD-type hydroxylase Bxeno_B2194 from Paraburkholderia xenovorans (strain LB400).